The sequence spans 244 residues: Ureidoacrylate amidohydrolase RutB (244 aa).

D38 serves as the catalytic Proton acceptor. K147 is a catalytic residue. C180 acts as the Nucleophile in catalysis.

It belongs to the isochorismatase family. RutB subfamily.

The enzyme catalyses (Z)-3-ureidoacrylate + H2O + H(+) = (Z)-3-aminoacrylate + NH4(+) + CO2. It carries out the reaction (Z)-3-ureidoacrylate + H2O = (Z)-3-aminoacrylate + carbamate + H(+). It catalyses the reaction (Z)-2-methylureidoacrylate + H2O + H(+) = (Z)-2-methylaminoacrylate + NH4(+) + CO2. Hydrolyzes ureidoacrylate to form aminoacrylate and carbamate. The carbamate hydrolyzes spontaneously, thereby releasing one of the nitrogen atoms of the pyrimidine ring as ammonia and one of its carbon atoms as CO2. This is Ureidoacrylate amidohydrolase RutB from Escherichia coli O55:H7 (strain CB9615 / EPEC).